The following is a 134-amino-acid chain: Large ribosomal subunit protein uL18 (134 aa).

Belongs to the universal ribosomal protein uL18 family. As to quaternary structure, part of the 50S ribosomal subunit; part of the 5S rRNA/L5/L18/L25 subcomplex. Contacts the 5S and 23S rRNAs.

Its function is as follows. This is one of the proteins that bind and probably mediate the attachment of the 5S RNA into the large ribosomal subunit, where it forms part of the central protuberance. The sequence is that of Large ribosomal subunit protein uL18 from Corynebacterium glutamicum (strain ATCC 13032 / DSM 20300 / JCM 1318 / BCRC 11384 / CCUG 27702 / LMG 3730 / NBRC 12168 / NCIMB 10025 / NRRL B-2784 / 534).